Reading from the N-terminus, the 535-residue chain is CTP synthase (535 aa).

Residues 1-267 (MTKYIFVTGG…DKLVCEHMKL (267 aa)) are amidoligase domain. Position 13 (S13) interacts with CTP. Residue S13 participates in UTP binding. Residue 14–19 (SLGKGI) coordinates ATP. Position 54 (Y54) interacts with L-glutamine. D71 serves as a coordination point for ATP. Positions 71 and 141 each coordinate Mg(2+). CTP is bound by residues 148–150 (DIE), 188–193 (KTKPTQ), and K224. Residues 188-193 (KTKPTQ) and K224 contribute to the UTP site. A Glutamine amidotransferase type-1 domain is found at 292-534 (TIGLVGKYVE…VGASLQASES (243 aa)). G354 provides a ligand contact to L-glutamine. C381 acts as the Nucleophile; for glutamine hydrolysis in catalysis. Residues 382 to 385 (LGMQ), E405, and R462 contribute to the L-glutamine site. Residues H507 and E509 contribute to the active site.

It belongs to the CTP synthase family. As to quaternary structure, homotetramer.

The enzyme catalyses UTP + L-glutamine + ATP + H2O = CTP + L-glutamate + ADP + phosphate + 2 H(+). It catalyses the reaction L-glutamine + H2O = L-glutamate + NH4(+). It carries out the reaction UTP + NH4(+) + ATP = CTP + ADP + phosphate + 2 H(+). It participates in pyrimidine metabolism; CTP biosynthesis via de novo pathway; CTP from UDP: step 2/2. Allosterically activated by GTP, when glutamine is the substrate; GTP has no effect on the reaction when ammonia is the substrate. The allosteric effector GTP functions by stabilizing the protein conformation that binds the tetrahedral intermediate(s) formed during glutamine hydrolysis. Inhibited by the product CTP, via allosteric rather than competitive inhibition. Catalyzes the ATP-dependent amination of UTP to CTP with either L-glutamine or ammonia as the source of nitrogen. Regulates intracellular CTP levels through interactions with the four ribonucleotide triphosphates. The chain is CTP synthase from Bacillus pumilus (strain SAFR-032).